Consider the following 735-residue polypeptide: Serine/threonine-protein kinase BRSK2 (735 aa).

The region spanning 20 to 271 is the Protein kinase domain; the sequence is YRLEKTLGKG…LEHIQKHIWY (252 aa). Residues 26–34 and Lys-49 contribute to the ATP site; that span reads LGKGQTGLV. The active-site Proton acceptor is Asp-142. Phosphothreonine; by LKB1 is present on Thr-175. Thr-261 is modified (phosphothreonine; by PKA). A Phosphoserine modification is found at Ser-295. The UBA domain occupies 298–340; it reads DIDPDVLDSMHSLGCFRDRNKLLQDLLSEEENQEKMIYFLLLD. A compositionally biased stretch (basic and acidic residues) spans 346–367; it reads PSHEDEDLPPRNEIDPPRKRVD. Disordered stretches follow at residues 346 to 476 and 492 to 516; these read PSHE…GVPW and RFHR…SSPE. Phosphoserine is present on residues Ser-368, Ser-383, Ser-394, Ser-413, Ser-424, and Ser-428. Low complexity predominate over residues 411–429; it reads SRSISGASSGLSTSPLSSP. Over residues 432–446 the composition is skewed to pro residues; that stretch reads TPHPSPRGSPLPTPK. At Ser-456 the chain carries Phosphoserine. 3 positions are modified to phosphothreonine: Thr-460, Thr-464, and Thr-510. Phosphoserine is present on residues Ser-513, Ser-514, and Ser-521. The short motif at 604–606 is the KEN box element; the sequence is KEN. Residues 682–735 form a disordered region; the sequence is KNGQAAQAPSTPAKRSAHGPLGDSAAAGPGGDTEYPMGKDMAKMGPPAARREQP.

Belongs to the protein kinase superfamily. CAMK Ser/Thr protein kinase family. SNF1 subfamily. As to quaternary structure, interacts with FZR1, a regulatory subunit of the APC ubiquitin ligase complex. Interacts with COPS5. Interacts with PAK1. The cofactor is Mg(2+). Post-translationally, may be phosphorylated at Thr-261 by PKA. Phosphorylated at Thr-175 by STK11/LKB1 in complex with STE20-related adapter-alpha (STRADA) pseudo kinase and CAB39. Not phosphorylated at Thr-175 by CaMKK2. In contrast, it is phosphorylated and activated by CaMKK1. May be inactivated via dephosphorylation of Thr-175 by PP2C. Polyubiquitinated by the APC complex in conjunction with FZR1, leading to its proteasomal degradation. Targeted for proteasomal degradation by interaction with COPS5. BRSK2 levels change during the cell cycle. BRSK2 levels are low at the G1/S boundary and gradually increase as cells progress into G2 phase. BRSK2 levels decrease rapidly at the end of mitosis. Detected in pancreas islets and in brain (at protein level). Detected in brain and pancreas.

The protein localises to the cytoplasm. Its subcellular location is the cytoskeleton. It is found in the microtubule organizing center. It localises to the centrosome. The protein resides in the perinuclear region. The protein localises to the endoplasmic reticulum. It carries out the reaction L-seryl-[protein] + ATP = O-phospho-L-seryl-[protein] + ADP + H(+). It catalyses the reaction L-threonyl-[protein] + ATP = O-phospho-L-threonyl-[protein] + ADP + H(+). The enzyme catalyses L-seryl-[tau protein] + ATP = O-phospho-L-seryl-[tau protein] + ADP + H(+). The catalysed reaction is L-threonyl-[tau protein] + ATP = O-phospho-L-threonyl-[tau protein] + ADP + H(+). Activated by phosphorylation on Thr-175 by STK11/LKB1. In terms of biological role, serine/threonine-protein kinase that plays a key role in polarization of neurons and axonogenesis, cell cycle progress and insulin secretion. Phosphorylates CDK16, CDC25C, MAPT/TAU, PAK1 and WEE1. Following phosphorylation and activation by STK11/LKB1, acts as a key regulator of polarization of cortical neurons, probably by mediating phosphorylation of microtubule-associated proteins such as MAPT/TAU at 'Thr-504' and 'Ser-554'. Also regulates neuron polarization by mediating phosphorylation of WEE1 at 'Ser-642' in post-mitotic neurons, leading to down-regulate WEE1 activity in polarized neurons. Plays a role in the regulation of the mitotic cell cycle progress and the onset of mitosis. Plays a role in the regulation of insulin secretion in response to elevated glucose levels, probably via phosphorylation of CDK16 and PAK1. While BRSK2 phosphorylated at Thr-175 can inhibit insulin secretion, BRSK2 phosphorylated at Thr-261 can promote insulin secretion. Regulates reorganization of the actin cytoskeleton. May play a role in the apoptotic response triggered by endoplasmic reticulum (ER) stress. In Mus musculus (Mouse), this protein is Serine/threonine-protein kinase BRSK2 (Brsk2).